Here is a 418-residue protein sequence, read N- to C-terminus: UDP-N-acetylglucosamine 1-carboxyvinyltransferase (418 aa).

Position 22-23 (22-23 (KN)) interacts with phosphoenolpyruvate. UDP-N-acetyl-alpha-D-glucosamine is bound at residue R92. C116 acts as the Proton donor in catalysis. Residue C116 is modified to 2-(S-cysteinyl)pyruvic acid O-phosphothioketal. UDP-N-acetyl-alpha-D-glucosamine contacts are provided by residues 121 to 125 (RPIDL), D305, and L327.

It belongs to the EPSP synthase family. MurA subfamily.

The protein resides in the cytoplasm. It carries out the reaction phosphoenolpyruvate + UDP-N-acetyl-alpha-D-glucosamine = UDP-N-acetyl-3-O-(1-carboxyvinyl)-alpha-D-glucosamine + phosphate. Its pathway is cell wall biogenesis; peptidoglycan biosynthesis. Functionally, cell wall formation. Adds enolpyruvyl to UDP-N-acetylglucosamine. The sequence is that of UDP-N-acetylglucosamine 1-carboxyvinyltransferase from Campylobacter jejuni subsp. jejuni serotype O:23/36 (strain 81-176).